Here is a 55-residue protein sequence, read N- to C-terminus: Large ribosomal subunit protein bL33 (55 aa).

The protein belongs to the bacterial ribosomal protein bL33 family.

The protein is Large ribosomal subunit protein bL33 (rpmG) of Buchnera aphidicola subsp. Acyrthosiphon pisum (strain APS) (Acyrthosiphon pisum symbiotic bacterium).